A 368-amino-acid polypeptide reads, in one-letter code: G-protein coupled receptor 62 (368 aa).

Residues 1–18 are Extracellular-facing; that stretch reads MANSTGLNASEVAGSLGL. N-linked (GlcNAc...) asparagine glycans are attached at residues Asn3 and Asn8. The chain crosses the membrane as a helical span at residues 19 to 39; it reads ILAAVVEVGALLGNGALLVVV. The Cytoplasmic segment spans residues 40 to 53; the sequence is LRTPGLRDALYLAH. A helical membrane pass occupies residues 54-74; the sequence is LCVVDLLAAASIMPLGLLAAP. The Extracellular portion of the chain corresponds to 75–91; it reads PPGLGRVRLGPAPCRAA. A helical membrane pass occupies residues 92–112; the sequence is RFLSAALLPACTLGVAALGLA. Topologically, residues 113 to 129 are cytoplasmic; sequence RYRLIVHPLRPGSRPPP. The helical transmembrane segment at 130–150 threads the bilayer; the sequence is VLVLTAVWAAAGLLGALSLLG. Topologically, residues 151 to 177 are extracellular; that stretch reads TPPAPPPAPARCSVLAGGLGPFRPLWA. A helical membrane pass occupies residues 178 to 198; that stretch reads LLAFALPALLLLGAYGGIFVV. Residues 199-239 are Cytoplasmic-facing; sequence ARRAALRPPRPARGSRLHSDSLDSRLSILPPLRPRLPGGKA. The helical transmembrane segment at 240–260 threads the bilayer; it reads ALAPALAVGQFAACWLPYGCA. The Extracellular portion of the chain corresponds to 261-272; sequence CLAPAARAAEAE. The chain crosses the membrane as a helical span at residues 273-293; that stretch reads AAVTWVAYSAFAAHPFLYGLL. At 294-368 the chain is on the cytoplasmic side; sequence QRPVRLALGR…YQGPPESSLS (75 aa). A disordered region spans residues 332–368; sequence RPPEGPAVGPSEAPEQTPELAGGRSPAYQGPPESSLS.

The protein belongs to the G-protein coupled receptor 1 family. Homodimers. Forms heterodimer with MTNR1B. Interacts with ARRB1 and ARRB2 in a spontaneous and agonist-independent manner; leading to the internalization of GPR62 in the endosomal compartment. As to expression, expressed in brain; detected in the basal forebrain, frontal cortex, caudate, putamen, thalamus and hippocampus.

It localises to the cell membrane. It is found in the endosome membrane. Its function is as follows. Orphan G-protein coupled receptor. Constitutively activates the G(q/11)/inositol phosphate and the G(s)-alpha/cAMP signaling pathways. Has spontaneous activity for beta-arrestin recruitment. Shows a reciprocal modulation of signaling functions with the melatonin receptor MTNR1B most likely through receptor heteromerization. This Homo sapiens (Human) protein is G-protein coupled receptor 62 (GPR62).